Reading from the N-terminus, the 72-residue chain is Cell division protein ZapB (72 aa).

The stretch at 1 to 71 (MSLEILDQLE…IRSLLGKFDN (71 aa)) forms a coiled coil.

It belongs to the ZapB family. As to quaternary structure, homodimer. The ends of the coiled-coil dimer bind to each other, forming polymers. Interacts with FtsZ.

It localises to the cytoplasm. Non-essential, abundant cell division factor that is required for proper Z-ring formation. It is recruited early to the divisome by direct interaction with FtsZ, stimulating Z-ring assembly and thereby promoting cell division earlier in the cell cycle. Its recruitment to the Z-ring requires functional FtsA or ZipA. The protein is Cell division protein ZapB of Haemophilus influenzae (strain 86-028NP).